The following is a 395-amino-acid chain: Putative gustatory receptor 58a (395 aa).

Topologically, residues Met-1–Arg-32 are cytoplasmic. Residues Trp-33–Phe-53 form a helical membrane-spanning segment. Over Pro-54–Thr-72 the chain is Extracellular. Residues Phe-73–Phe-93 traverse the membrane as a helical segment. Over Arg-94–Asn-131 the chain is Cytoplasmic. Residues Val-132–Phe-152 traverse the membrane as a helical segment. The Extracellular portion of the chain corresponds to Arg-153–His-169. The helical transmembrane segment at Ile-170 to Leu-190 threads the bilayer. The Cytoplasmic segment spans residues His-191–Thr-250. A helical transmembrane segment spans residues Phe-251–Tyr-271. Over His-272 to Arg-288 the chain is Extracellular. Asn-278 carries an N-linked (GlcNAc...) asparagine glycan. A helical membrane pass occupies residues Ile-289 to Val-309. At Asp-310–Gln-366 the chain is on the cytoplasmic side. Residues Thr-367–Leu-387 form a helical membrane-spanning segment. At Lys-388–Asn-395 the chain is on the extracellular side.

The protein belongs to the insect chemoreceptor superfamily. Gustatory receptor (GR) family. Gr22e subfamily. In terms of tissue distribution, expressed in the adult labellar chemosensory neurons.

The protein localises to the cell membrane. In terms of biological role, probable gustatory receptor which mediates acceptance or avoidance behavior, depending on its substrates. In Drosophila melanogaster (Fruit fly), this protein is Putative gustatory receptor 58a (Gr58a).